Here is a 394-residue protein sequence, read N- to C-terminus: Glycerol-1-phosphate dehydrogenase [NAD(P)+] (394 aa).

NAD(+)-binding positions include D54, 116 to 120 (GTIHD), and 138 to 141 (TAPS). A substrate-binding site is contributed by D143. Position 147 (S147) interacts with NAD(+). Residue D190 coordinates substrate. The Ni(2+) site is built by D190 and H270. Substrate is bound at residue H274. Ni(2+) is bound at residue H290.

Belongs to the glycerol-1-phosphate dehydrogenase family. Homodimer. Ni(2+) serves as cofactor.

The protein localises to the cytoplasm. It catalyses the reaction sn-glycerol 1-phosphate + NAD(+) = dihydroxyacetone phosphate + NADH + H(+). The enzyme catalyses sn-glycerol 1-phosphate + NADP(+) = dihydroxyacetone phosphate + NADPH + H(+). Its function is as follows. Catalyzes the NAD(P)H-dependent reduction of dihydroxyacetonephosphate (DHAP or glycerone phosphate) to glycerol 1-phosphate (G1P). The G1P thus generated is probably used for the synthesis of phosphoglycerolipids in Gram-positive bacterial species. This is Glycerol-1-phosphate dehydrogenase [NAD(P)+] from Bacillus velezensis (strain DSM 23117 / BGSC 10A6 / LMG 26770 / FZB42) (Bacillus amyloliquefaciens subsp. plantarum).